A 302-amino-acid polypeptide reads, in one-letter code: Gap junction delta-2 protein (302 aa).

The Cytoplasmic portion of the chain corresponds to 1–19 (MGEWTILERLLEAAVQQHS). Residues 20–42 (TMIGRILLTVVVIFRILVVAIVG) form a helical membrane-spanning segment. Residues 43–75 (ETVYDDEQTMFVCNTLQPGCNQACYDKAFPISH) lie on the Extracellular side of the membrane. A helical transmembrane segment spans residues 76–98 (IRYWVFQIIMVCTPSLCFITYSV). Topologically, residues 99 to 177 (HQSSKQRERQ…KIRRQEGISR (79 aa)) are cytoplasmic. The helical transmembrane segment at 178 to 200 (FYIIQVVFRNALEIGFLMGQYFL) threads the bilayer. The Extracellular portion of the chain corresponds to 201 to 232 (YGFKVPSMYECNRYPCVKMVECYVSRPTEKTV). A helical transmembrane segment spans residues 233-255 (FLVFMFAVSGLCVILNLAELNHL). Over 256–302 (GWRKIKTAVRGAQERRKSIYEIRNKDSPHRIGVPNFGRTQSSDSAYV) the chain is Cytoplasmic.

This sequence belongs to the connexin family. Delta-type subfamily. A connexon is composed of a hexamer of connexins. Retinal specific.

It is found in the cell membrane. Its subcellular location is the cell junction. The protein localises to the gap junction. In terms of biological role, one gap junction consists of a cluster of closely packed pairs of transmembrane channels, the connexons, through which materials of low MW diffuse from one cell to a neighboring cell. The polypeptide is Gap junction delta-2 protein (Leucoraja erinaceus (Little skate)).